We begin with the raw amino-acid sequence, 49 residues long: Large ribosomal subunit protein bL33A (49 aa).

The protein belongs to the bacterial ribosomal protein bL33 family.

The protein is Large ribosomal subunit protein bL33A (rpmG1) of Enterococcus faecalis (strain ATCC 700802 / V583).